The following is a 213-amino-acid chain: 3-isopropylmalate dehydratase small subunit (213 aa).

It belongs to the LeuD family. LeuD type 1 subfamily. Heterodimer of LeuC and LeuD.

It carries out the reaction (2R,3S)-3-isopropylmalate = (2S)-2-isopropylmalate. Its pathway is amino-acid biosynthesis; L-leucine biosynthesis; L-leucine from 3-methyl-2-oxobutanoate: step 2/4. In terms of biological role, catalyzes the isomerization between 2-isopropylmalate and 3-isopropylmalate, via the formation of 2-isopropylmaleate. This is 3-isopropylmalate dehydratase small subunit from Neisseria gonorrhoeae (strain ATCC 700825 / FA 1090).